The following is a 232-amino-acid chain: RNA chaperone ProQ (232 aa).

A disordered region spans residues 105–182 (EAKARVQAQR…REEQHTPVSD (78 aa)). Over residues 117 to 136 (QQAKKREAAAAAGEKEDAPR) the composition is skewed to basic and acidic residues. Over residues 137-146 (RERKPRPTTP) the composition is skewed to basic residues. The span at 147–177 (RRKEGAERKPRAQKPVEKAPKTAKAPREEQH) shows a compositional bias: basic and acidic residues.

The protein belongs to the ProQ family.

The protein resides in the cytoplasm. Its function is as follows. RNA chaperone with significant RNA binding, RNA strand exchange and RNA duplexing activities. May regulate ProP activity through an RNA-based, post-transcriptional mechanism. This is RNA chaperone ProQ from Shigella dysenteriae serotype 1 (strain Sd197).